The following is a 455-amino-acid chain: MAAREEVLALQAEVAQREEELSSLKQRLAAALSTGQESARSVPVSPLPPRAALSREEIRRYSRQLVLPELGMQGQLRLAAAAVLVVGCGGLGCPLAQYLAAAGVGRLGLVDYDVVEASNLARQVLHGEALAGQAKVFSAAAALRRLNSAVECVPYAQALTPATALDLVRRYDVVADCSDNAPTRYLVSDACVLAGRPLVSASALRFEGQLTVYHYGGGPCYRCVFPRPPPAETVTSCADGGVLGAVTGVLGCLQALEVLKTAAGLGPSYSGRLLLFDALRGDFRCIRLRRRRPDCAACGERPTVTDLQDYESFCGSSATDKCRSLRLLSPEERISIMDYKRLLDSRSPHLLLDVRPQVEVDICRLPHALHIPLKSLERRDAESLKVLGEAIREGKQGAQEGASVPIYVICKLGNDSQKAVKILQSWADLDSLTVKDVVGGLMAWAAKIDGTFPQY.

Residues Gly-90, Asp-111, 118-122, Lys-135, and 179-180 contribute to the ATP site; these read SNLAR and DN. The tract at residues 156-236 is interaction with NFS1; that stretch reads AQALTPATAL…RPPPAETVTS (81 aa). Positions 220 and 223 each coordinate Zn(2+). Cys-237 (glycyl thioester intermediate; for adenylyltransferase activity) is an active-site residue. 2 residues coordinate Zn(2+): Cys-295 and Cys-298. Cys-314 and Cys-322 are oxidised to a cystine. One can recognise a Rhodanese domain in the interval 345-453; that stretch reads SRSPHLLLDV…WAAKIDGTFP (109 aa). Cys-410 (cysteine persulfide intermediate; for sulfurtransferase activity) is an active-site residue. At Cys-410 the chain carries Cysteine persulfide.

The protein in the N-terminal section; belongs to the HesA/MoeB/ThiF family. UBA4 subfamily. As to quaternary structure, interacts with NFS1. It depends on Zn(2+) as a cofactor.

It localises to the cytoplasm. It is found in the cytosol. The enzyme catalyses [molybdopterin-synthase sulfur-carrier protein]-C-terminal Gly-Gly + ATP + H(+) = [molybdopterin-synthase sulfur-carrier protein]-C-terminal Gly-Gly-AMP + diphosphate. The catalysed reaction is [molybdopterin-synthase sulfur-carrier protein]-C-terminal Gly-Gly-AMP + S-sulfanyl-L-cysteinyl-[cysteine desulfurase] + AH2 = [molybdopterin-synthase sulfur-carrier protein]-C-terminal-Gly-aminoethanethioate + L-cysteinyl-[cysteine desulfurase] + A + AMP + 2 H(+). Its pathway is tRNA modification; 5-methoxycarbonylmethyl-2-thiouridine-tRNA biosynthesis. It participates in cofactor biosynthesis; molybdopterin biosynthesis. Plays a central role in 2-thiolation of mcm(5)S(2)U at tRNA wobble positions of cytosolic tRNA(Lys), tRNA(Glu) and tRNA(Gln). Also essential during biosynthesis of the molybdenum cofactor. Acts by mediating the C-terminal thiocarboxylation of sulfur carriers URM1 and MOCS2A. Its N-terminus first activates URM1 and MOCS2A as acyl-adenylates (-COAMP), then the persulfide sulfur on the catalytic cysteine is transferred to URM1 and MOCS2A to form thiocarboxylation (-COSH) of their C-terminus. The reaction probably involves hydrogen sulfide that is generated from the persulfide intermediate and that acts as a nucleophile towards URM1 and MOCS2A. Subsequently, a transient disulfide bond is formed. Does not use thiosulfate as sulfur donor; NFS1 acting as a sulfur donor for thiocarboxylation reactions. The protein is Adenylyltransferase and sulfurtransferase MOCS3 of Bos taurus (Bovine).